We begin with the raw amino-acid sequence, 156 residues long: Cyanate hydratase (156 aa).

Catalysis depends on residues arginine 96, glutamate 99, and serine 122.

Belongs to the cyanase family.

The catalysed reaction is cyanate + hydrogencarbonate + 3 H(+) = NH4(+) + 2 CO2. In terms of biological role, catalyzes the reaction of cyanate with bicarbonate to produce ammonia and carbon dioxide. This chain is Cyanate hydratase, found in Pseudomonas entomophila (strain L48).